We begin with the raw amino-acid sequence, 382 residues long: 26S proteasome non-ATPase regulatory subunit 6 (382 aa).

In terms of domain architecture, PCI spans 186–354 (QFKEASDLYL…GVIETTRSDA (169 aa)).

The protein belongs to the proteasome subunit S10 family.

Acts as a regulatory subunit of the 26S proteasome which is involved in the ATP-dependent degradation of ubiquitinated proteins. The sequence is that of 26S proteasome non-ATPase regulatory subunit 6 (psmD6) from Dictyostelium discoideum (Social amoeba).